We begin with the raw amino-acid sequence, 147 residues long: Large ribosomal subunit protein uL22 (147 aa).

Belongs to the universal ribosomal protein uL22 family. Part of the 50S ribosomal subunit.

Its function is as follows. This protein binds specifically to 23S rRNA; its binding is stimulated by other ribosomal proteins, e.g. L4, L17, and L20. It is important during the early stages of 50S assembly. It makes multiple contacts with different domains of the 23S rRNA in the assembled 50S subunit and ribosome. Functionally, the globular domain of the protein is located near the polypeptide exit tunnel on the outside of the subunit, while an extended beta-hairpin is found that lines the wall of the exit tunnel in the center of the 70S ribosome. The chain is Large ribosomal subunit protein uL22 from Fervidobacterium nodosum (strain ATCC 35602 / DSM 5306 / Rt17-B1).